A 136-amino-acid polypeptide reads, in one-letter code: Large ribosomal subunit protein uL16 (136 aa).

The protein belongs to the universal ribosomal protein uL16 family. In terms of assembly, part of the 50S ribosomal subunit.

Its function is as follows. Binds 23S rRNA and is also seen to make contacts with the A and possibly P site tRNAs. This is Large ribosomal subunit protein uL16 from Shewanella piezotolerans (strain WP3 / JCM 13877).